We begin with the raw amino-acid sequence, 546 residues long: Methionine--tRNA ligase (546 aa).

Positions 15–25 match the 'HIGH' region motif; the sequence is PYANGPIHLGH. Residues cysteine 146, cysteine 149, cysteine 159, and cysteine 162 each contribute to the Zn(2+) site. Positions 332-336 match the 'KMSKS' region motif; sequence KMSKS. ATP is bound at residue lysine 335.

The protein belongs to the class-I aminoacyl-tRNA synthetase family. MetG type 1 subfamily. Monomer. Zn(2+) is required as a cofactor.

Its subcellular location is the cytoplasm. The enzyme catalyses tRNA(Met) + L-methionine + ATP = L-methionyl-tRNA(Met) + AMP + diphosphate. Its function is as follows. Is required not only for elongation of protein synthesis but also for the initiation of all mRNA translation through initiator tRNA(fMet) aminoacylation. The protein is Methionine--tRNA ligase of Coxiella burnetii (strain Dugway 5J108-111).